We begin with the raw amino-acid sequence, 487 residues long: Betaine aldehyde dehydrogenase (487 aa).

The K(+) site is built by S26 and D93. 150 to 152 (GAW) lines the NAD(+) pocket. The active-site Charge relay system is the K162. Residues 176-179 (KPSE) and 229-232 (SVPT) each bind NAD(+). L244 serves as a coordination point for K(+). The Proton acceptor role is filled by E250. The NAD(+) site is built by G252, C284, and E384. C284 functions as the Nucleophile in the catalytic mechanism. Cysteine sulfenic acid (-SOH) is present on C284. K454 and G457 together coordinate K(+). E461 serves as the catalytic Charge relay system.

This sequence belongs to the aldehyde dehydrogenase family. In terms of assembly, dimer of dimers. K(+) serves as cofactor.

The catalysed reaction is betaine aldehyde + NAD(+) + H2O = glycine betaine + NADH + 2 H(+). It functions in the pathway amine and polyamine biosynthesis; betaine biosynthesis via choline pathway; betaine from betaine aldehyde: step 1/1. Involved in the biosynthesis of the osmoprotectant glycine betaine. Catalyzes the irreversible oxidation of betaine aldehyde to the corresponding acid. This is Betaine aldehyde dehydrogenase from Rhizobium leguminosarum bv. trifolii (strain WSM2304).